Here is a 583-residue protein sequence, read N- to C-terminus: Sensor protein SrrB (583 aa).

Residues 1-11 (MMSRLNSVVIK) are Cytoplasmic-facing. The chain crosses the membrane as a helical span at residues 12–32 (LWLTIILIVTTVLILLSIALI). Residues 33–174 (TFMQYYFTQE…SIEDTNNAIT (142 aa)) lie on the Extracellular side of the membrane. The helical transmembrane segment at 175–195 (IITIITAVIFLTITTVFAFFL) threads the bilayer. At 196-583 (SSRITKPLRR…TFIIKLPKPE (388 aa)) the chain is on the cytoplasmic side. An HAMP domain is found at 197–249 (SRITKPLRRLRDQATRVSEGDYSYKPSVTTKDEIGQLSQAFNQMSTEIEEHVD). The Histidine kinase domain occupies 366–583 (NVSHELRTPI…TFIIKLPKPE (218 aa)). Phosphohistidine; by autocatalysis is present on His369.

It is found in the cell membrane. It carries out the reaction ATP + protein L-histidine = ADP + protein N-phospho-L-histidine.. Its function is as follows. Member of the two-component regulatory system SrrA/SrrB, which is involved in the global regulation of staphylococcal virulence factors in response to environmental oxygen levels as well as biofilm formation. Also plays an essential role in host-derived nitric oxide resistance by regulating hmp/flavohemoglobin, an enzyme that detoxifies nitric oxide by converting it to nitrate. Functions as a sensor protein kinase which is autophosphorylated at a histidine residue and transfers its phosphate group to SrrA. In turn, SrrA binds to the upstream promoter regions of the target genes to positively and negatively regulate their expression. The chain is Sensor protein SrrB (srrB) from Staphylococcus aureus (strain MRSA252).